The sequence spans 890 residues: Genome polyprotein 2 (890 aa).

The Peptidase C6 domain occupies 135-255 (AFNFAHGYCY…NSDLLNGIVG (121 aa)). Catalysis depends on for helper component proteinase activity residues C143 and H215. Residues 508–533 (TSGDDDLPPPPGDSPSRPPGRSPDRV) form a disordered region. Positions 515–528 (PPPPGDSPSRPPGR) are enriched in pro residues.

It belongs to the bymoviruses polyprotein 2 family. The viral RNA2 of bymoviruses is expressed as a single polyprotein which undergoes post-translational proteolytic processing resulting in the production of at least two individual proteins. The HC-pro cleaves its C-terminus autocatalytically (Potential).

The enzyme catalyses Hydrolyzes a Gly-|-Gly bond at its own C-terminus, commonly in the sequence -Tyr-Xaa-Val-Gly-|-Gly, in the processing of the potyviral polyprotein.. The sequence is that of Genome polyprotein 2 (RNA2) from Barley yellow mosaic virus (isolate Germany) (BaYMV).